The sequence spans 111 residues: uncharacterized protein (111 aa).

This is an uncharacterized protein from Schizosaccharomyces pombe (strain 972 / ATCC 24843) (Fission yeast).